The sequence spans 666 residues: Long chain acyl-CoA synthetase 5 (666 aa).

Residue I228 to K239 participates in ATP binding. The fatty acid-binding stretch occupies residues D495 to K519.

Belongs to the ATP-dependent AMP-binding enzyme family. Mg(2+) is required as a cofactor.

It carries out the reaction a long-chain fatty acid + ATP + CoA = a long-chain fatty acyl-CoA + AMP + diphosphate. It functions in the pathway lipid metabolism; fatty acid metabolism. Its function is as follows. Activation of long-chain fatty acids for both synthesis of cellular lipids, and degradation via beta-oxidation. Preferentially uses palmitate, palmitoleate, oleate and linoleate. This is Long chain acyl-CoA synthetase 5 (LACS5) from Arabidopsis thaliana (Mouse-ear cress).